The primary structure comprises 323 residues: Lipoyl synthase (323 aa).

Residues C61, C66, C72, C87, C91, C94, and S300 each contribute to the [4Fe-4S] cluster site. One can recognise a Radical SAM core domain in the interval 73-289 (WDKKHATFMI…ETVAYSKGFL (217 aa)).

It belongs to the radical SAM superfamily. Lipoyl synthase family. [4Fe-4S] cluster serves as cofactor.

Its subcellular location is the cytoplasm. The enzyme catalyses [[Fe-S] cluster scaffold protein carrying a second [4Fe-4S](2+) cluster] + N(6)-octanoyl-L-lysyl-[protein] + 2 oxidized [2Fe-2S]-[ferredoxin] + 2 S-adenosyl-L-methionine + 4 H(+) = [[Fe-S] cluster scaffold protein] + N(6)-[(R)-dihydrolipoyl]-L-lysyl-[protein] + 4 Fe(3+) + 2 hydrogen sulfide + 2 5'-deoxyadenosine + 2 L-methionine + 2 reduced [2Fe-2S]-[ferredoxin]. It functions in the pathway protein modification; protein lipoylation via endogenous pathway; protein N(6)-(lipoyl)lysine from octanoyl-[acyl-carrier-protein]: step 2/2. Its function is as follows. Catalyzes the radical-mediated insertion of two sulfur atoms into the C-6 and C-8 positions of the octanoyl moiety bound to the lipoyl domains of lipoate-dependent enzymes, thereby converting the octanoylated domains into lipoylated derivatives. This chain is Lipoyl synthase, found in Rhizobium etli (strain CIAT 652).